Consider the following 64-residue polypeptide: Conotoxin Im11.2 (64 aa).

The first 26 residues, 1–26 (MMFRLTSVSCFLLVIVCLNLVVLTNA), serve as a signal peptide directing secretion. 4 cysteine pairs are disulfide-bonded: Cys-27-Cys-41, Cys-34-Cys-46, Cys-40-Cys-50, and Cys-45-Cys-54. The residue at position 57 (Asp-57) is an Aspartic acid 1-amide. The propeptide occupies 61 to 64 (ATFQ).

This sequence belongs to the conotoxin I2 superfamily. Expressed by the venom duct.

The protein resides in the secreted. The sequence is that of Conotoxin Im11.2 from Conus imperialis (Imperial cone).